The primary structure comprises 265 residues: Neutrophil elastase (265 aa).

The N-terminal stretch at 1–26 (MALGRLSSRTLAAMLLALFLGGPALA) is a signal peptide. One can recognise a Peptidase S1 domain in the interval 29–247 (IVGGRPARPH…FADWINSIIR (219 aa)). Cysteines 54 and 70 form a disulfide. Residues H69 and D116 each act as charge relay system in the active site. Residues N123 and N172 are each glycosylated (N-linked (GlcNAc...) asparagine). Disulfide bonds link C150–C208, C180–C187, and C198–C223. The Charge relay system role is filled by S202.

Belongs to the peptidase S1 family. Elastase subfamily. As to quaternary structure, interacts with NOTCH2NL.

It carries out the reaction Hydrolysis of proteins, including elastin. Preferential cleavage: Val-|-Xaa &gt; Ala-|-Xaa.. In terms of biological role, serine protease that modifies the functions of natural killer cells, monocytes and granulocytes. Inhibits C5a-dependent neutrophil enzyme release and chemotaxis. Promotes blood coagulation. Through the activation of the platelet fibrinogen receptor integrin alpha-IIb/beta-3, potentiates platelet aggregation induced by a threshold concentration of cathepsin G (CTSG). Cleaves and thus inactivates tissue factor pathway inhibitor (TFPI). Capable of killing E.coli; probably digests outer membrane protein A (ompA) in E.coli. The chain is Neutrophil elastase (Elane) from Mus musculus (Mouse).